The sequence spans 239 residues: Phosphoribosylaminoimidazole-succinocarboxamide synthase (239 aa).

Belongs to the SAICAR synthetase family.

It carries out the reaction 5-amino-1-(5-phospho-D-ribosyl)imidazole-4-carboxylate + L-aspartate + ATP = (2S)-2-[5-amino-1-(5-phospho-beta-D-ribosyl)imidazole-4-carboxamido]succinate + ADP + phosphate + 2 H(+). Its pathway is purine metabolism; IMP biosynthesis via de novo pathway; 5-amino-1-(5-phospho-D-ribosyl)imidazole-4-carboxamide from 5-amino-1-(5-phospho-D-ribosyl)imidazole-4-carboxylate: step 1/2. This Bacillus cytotoxicus (strain DSM 22905 / CIP 110041 / 391-98 / NVH 391-98) protein is Phosphoribosylaminoimidazole-succinocarboxamide synthase.